A 345-amino-acid polypeptide reads, in one-letter code: Ribosome production factor 1 (345 aa).

Disordered regions lie at residues 1 to 57 (MAKA…ISEI) and 70 to 105 (WKQQQRKEKLAAKKKLKREREALGDKAPPKPVPKTI). Positions 87–97 (REREALGDKAP) are enriched in basic and acidic residues. Positions 142–325 (PKILITTSDR…LRSLQKGTFD (184 aa)) constitute a Brix domain. Positions 303-320 (VGIQELGPRFTLKLRSLQ) are RNA-binding.

It localises to the nucleus. It is found in the nucleolus. May be required for ribosome biogenesis. In Rattus norvegicus (Rat), this protein is Ribosome production factor 1 (Rpf1).